We begin with the raw amino-acid sequence, 275 residues long: S-methyl-5'-thioadenosine phosphorylase (275 aa).

Phosphate-binding positions include Ser-20, 62–63 (RH), and 95–96 (SA). 3 cysteine pairs are disulfide-bonded: Cys-143–Cys-210, Cys-205–Cys-266, and Cys-264–Cys-267. Met-195 lines the substrate pocket. Thr-196 is a phosphate binding site. Residue 219 to 221 (DYD) participates in substrate binding.

It belongs to the PNP/MTAP phosphorylase family. MTAP subfamily. Homohexamer. Dimer of a homotrimer.

The catalysed reaction is S-methyl-5'-thioadenosine + phosphate = 5-(methylsulfanyl)-alpha-D-ribose 1-phosphate + adenine. It functions in the pathway amino-acid biosynthesis; L-methionine biosynthesis via salvage pathway; S-methyl-5-thio-alpha-D-ribose 1-phosphate from S-methyl-5'-thioadenosine (phosphorylase route): step 1/1. In terms of biological role, catalyzes the reversible phosphorylation of S-methyl-5'-thioadenosine (MTA) to adenine and 5-methylthioribose-1-phosphate. Involved in the breakdown of MTA, a major by-product of polyamine biosynthesis. Responsible for the first step in the methionine salvage pathway after MTA has been generated from S-adenosylmethionine. Has broad substrate specificity with 6-aminopurine nucleosides as preferred substrates. This Aeropyrum pernix (strain ATCC 700893 / DSM 11879 / JCM 9820 / NBRC 100138 / K1) protein is S-methyl-5'-thioadenosine phosphorylase.